Reading from the N-terminus, the 372-residue chain is Invasion protein InvE (372 aa).

Residues 1 to 19 (MIPGSTSGISFSRILSRQA) show a composition bias toward polar residues. Positions 1–47 (MIPGSTSGISFSRILSRQASHQDATQHTDAQQAEIQQAAEDSSPGAE) are disordered. A compositionally biased stretch (low complexity) spans 21 to 40 (HQDATQHTDAQQAEIQQAAE).

It is found in the cell membrane. Its function is as follows. Involved in the triggering of intracellular events that lead to microbial internalization. These events include increase in calcium level, redistribution of actin microfilaments, and changes in the normal structure of the microvilli. Encoded within the type III secretion system (SPI-1 T3SS), it is essential for the translocation of protein effectors into host cells. Forms a complex with SipB and SipC in the presence of their chaperone SicA. This is Invasion protein InvE (invE) from Salmonella typhi.